Consider the following 789-residue polypeptide: DEAD-box ATP-dependent RNA helicase 28 (789 aa).

The segment at 1 to 152 (MPSSFFFEDA…AEYKPEDATP (152 aa)) is disordered. Residues 13 to 66 (DELELIRNQEDSSEEDVKEGEAEEHEAGEDEDGEEEYEEEDDDEEEEDEKRKRD) adopt a coiled-coil conformation. Over residues 23 to 60 (DSSEEDVKEGEAEEHEAGEDEDGEEEYEEEDDDEEEED) the composition is skewed to acidic residues. Residues 83-99 (GEEHARRHTTSIDEKIS) show a composition bias toward basic and acidic residues. Residues 110–135 (SINEEEEEEEEEEDASDAETDKQEEY) adopt a coiled-coil conformation. The span at 112 to 127 (NEEEEEEEEEEDASDA) shows a compositional bias: acidic residues. Positions 167-195 (DTFMELNLSRPLLRACETLGYKKPTPIQA) match the Q motif motif. One can recognise a Helicase ATP-binding domain in the interval 198 to 372 (IPLALTGRDL…KLSLNKPLRL (175 aa)). 211–218 (AITGSGKT) provides a ligand contact to ATP. The DEAD box motif lies at 320–323 (DEAD). In terms of domain architecture, Helicase C-terminal spans 402–546 (VLLSLCTRTF…SRVIPEQSIV (145 aa)). Coiled-coil stretches lie at residues 563–591 (ISAE…HRDE) and 628–677 (SADR…EDEE). The disordered stretch occupies residues 611-789 (AQAEKDSAGN…FKSKARYKRR (179 aa)). Over residues 628–637 (SADRAEDLKM) the composition is skewed to basic and acidic residues. The span at 638 to 656 (KEKRKREREKNLPRKKRRK) shows a compositional bias: basic residues. Positions 665 to 678 (EDNEGEEEEEDEEG) are enriched in acidic residues. Composition is skewed to basic and acidic residues over residues 691–701 (KKQETDKKGLT), 718–734 (RAID…DKKQ), and 743–761 (PRGE…EKKQ). Residues 772–789 (PRTKSKNSFKSKARYKRR) show a composition bias toward basic residues.

It belongs to the DEAD box helicase family. DDX27/DRS1 subfamily.

It catalyses the reaction ATP + H2O = ADP + phosphate + H(+). The chain is DEAD-box ATP-dependent RNA helicase 28 (RH28) from Arabidopsis thaliana (Mouse-ear cress).